The sequence spans 336 residues: Biotin synthase (336 aa).

The Radical SAM core domain maps to 51–270 (NQVQCNQLLN…IALARIMMPK (220 aa)). [4Fe-4S] cluster contacts are provided by cysteine 66, cysteine 70, and cysteine 73. Positions 110, 141, 201, and 274 each coordinate [2Fe-2S] cluster.

Belongs to the radical SAM superfamily. Biotin synthase family. In terms of assembly, homodimer. It depends on [4Fe-4S] cluster as a cofactor. [2Fe-2S] cluster is required as a cofactor.

The enzyme catalyses (4R,5S)-dethiobiotin + (sulfur carrier)-SH + 2 reduced [2Fe-2S]-[ferredoxin] + 2 S-adenosyl-L-methionine = (sulfur carrier)-H + biotin + 2 5'-deoxyadenosine + 2 L-methionine + 2 oxidized [2Fe-2S]-[ferredoxin]. It participates in cofactor biosynthesis; biotin biosynthesis; biotin from 7,8-diaminononanoate: step 2/2. Its function is as follows. Catalyzes the conversion of dethiobiotin (DTB) to biotin by the insertion of a sulfur atom into dethiobiotin via a radical-based mechanism. The sequence is that of Biotin synthase from Rhodopseudomonas palustris (strain ATCC BAA-98 / CGA009).